We begin with the raw amino-acid sequence, 35 residues long: Photosystem II reaction center protein T (35 aa).

A helical transmembrane segment spans residues 3–23 (ALVYTFLLVGTLGIIFFAIFF).

This sequence belongs to the PsbT family. As to quaternary structure, PSII is composed of 1 copy each of membrane proteins PsbA, PsbB, PsbC, PsbD, PsbE, PsbF, PsbH, PsbI, PsbJ, PsbK, PsbL, PsbM, PsbT, PsbY, PsbZ, Psb30/Ycf12, at least 3 peripheral proteins of the oxygen-evolving complex and a large number of cofactors. It forms dimeric complexes.

It localises to the plastid. The protein localises to the chloroplast thylakoid membrane. In terms of biological role, found at the monomer-monomer interface of the photosystem II (PS II) dimer, plays a role in assembly and dimerization of PSII. PSII is a light-driven water plastoquinone oxidoreductase, using light energy to abstract electrons from H(2)O, generating a proton gradient subsequently used for ATP formation. This Staurastrum punctulatum (Green alga) protein is Photosystem II reaction center protein T.